The chain runs to 207 residues: Thiamine-phosphate synthase (207 aa).

4-amino-2-methyl-5-(diphosphooxymethyl)pyrimidine-binding positions include 36–40 and Asn-68; that span reads QLRMK. Mg(2+) contacts are provided by Asp-69 and Asp-88. Residue Ser-106 participates in 4-amino-2-methyl-5-(diphosphooxymethyl)pyrimidine binding. 132–134 is a 2-[(2R,5Z)-2-carboxy-4-methylthiazol-5(2H)-ylidene]ethyl phosphate binding site; that stretch reads TNT. 4-amino-2-methyl-5-(diphosphooxymethyl)pyrimidine is bound at residue Lys-135. Residues Gly-162 and 182–183 each bind 2-[(2R,5Z)-2-carboxy-4-methylthiazol-5(2H)-ylidene]ethyl phosphate; that span reads VS.

It belongs to the thiamine-phosphate synthase family. Mg(2+) serves as cofactor.

It carries out the reaction 2-[(2R,5Z)-2-carboxy-4-methylthiazol-5(2H)-ylidene]ethyl phosphate + 4-amino-2-methyl-5-(diphosphooxymethyl)pyrimidine + 2 H(+) = thiamine phosphate + CO2 + diphosphate. The enzyme catalyses 2-(2-carboxy-4-methylthiazol-5-yl)ethyl phosphate + 4-amino-2-methyl-5-(diphosphooxymethyl)pyrimidine + 2 H(+) = thiamine phosphate + CO2 + diphosphate. It catalyses the reaction 4-methyl-5-(2-phosphooxyethyl)-thiazole + 4-amino-2-methyl-5-(diphosphooxymethyl)pyrimidine + H(+) = thiamine phosphate + diphosphate. It participates in cofactor biosynthesis; thiamine diphosphate biosynthesis; thiamine phosphate from 4-amino-2-methyl-5-diphosphomethylpyrimidine and 4-methyl-5-(2-phosphoethyl)-thiazole: step 1/1. Its function is as follows. Condenses 4-methyl-5-(beta-hydroxyethyl)thiazole monophosphate (THZ-P) and 2-methyl-4-amino-5-hydroxymethyl pyrimidine pyrophosphate (HMP-PP) to form thiamine monophosphate (TMP). The polypeptide is Thiamine-phosphate synthase (Methanococcus maripaludis (strain DSM 14266 / JCM 13030 / NBRC 101832 / S2 / LL)).